A 54-amino-acid polypeptide reads, in one-letter code: Large ribosomal subunit protein bL33 (54 aa).

This sequence belongs to the bacterial ribosomal protein bL33 family.

In Rhodopirellula baltica (strain DSM 10527 / NCIMB 13988 / SH1), this protein is Large ribosomal subunit protein bL33.